Consider the following 154-residue polypeptide: Ribonuclease H (154 aa).

An RNase H type-1 domain is found at methionine 1–asparagine 142. Mg(2+)-binding residues include aspartate 10, glutamate 48, aspartate 70, and aspartate 134.

The protein belongs to the RNase H family. In terms of assembly, monomer. It depends on Mg(2+) as a cofactor.

The protein resides in the cytoplasm. The catalysed reaction is Endonucleolytic cleavage to 5'-phosphomonoester.. Endonuclease that specifically degrades the RNA of RNA-DNA hybrids. The chain is Ribonuclease H from Yersinia enterocolitica serotype O:8 / biotype 1B (strain NCTC 13174 / 8081).